The chain runs to 699 residues: Elongation factor G (699 aa).

Residues 8–288 (EDYRNFGIMA…AVVDYLPSPI (281 aa)) form the tr-type G domain. Residues 17 to 24 (AHIDAGKT), 86 to 90 (DTPGH), and 140 to 143 (NKMD) contribute to the GTP site.

Belongs to the TRAFAC class translation factor GTPase superfamily. Classic translation factor GTPase family. EF-G/EF-2 subfamily.

The protein resides in the cytoplasm. Its function is as follows. Catalyzes the GTP-dependent ribosomal translocation step during translation elongation. During this step, the ribosome changes from the pre-translocational (PRE) to the post-translocational (POST) state as the newly formed A-site-bound peptidyl-tRNA and P-site-bound deacylated tRNA move to the P and E sites, respectively. Catalyzes the coordinated movement of the two tRNA molecules, the mRNA and conformational changes in the ribosome. This is Elongation factor G from Sinorhizobium fredii (strain NBRC 101917 / NGR234).